Reading from the N-terminus, the 489-residue chain is Beta-1,3-glucosyltransferase (489 aa).

Position 1 (methionine 1) is a topological domain, cytoplasmic. The helical; Signal-anchor for type II membrane protein transmembrane segment at 2–22 threads the bilayer; that stretch reads RPPALLALFSCSAAFALMSEE. The Lumenal portion of the chain corresponds to 23–489; it reads IKEKVTPSQD…ETQKDPREEL (467 aa). Asparagine 78 carries N-linked (GlcNAc...) asparagine glycosylation. Residues 486–489 carry the Prevents secretion from ER motif; it reads REEL.

It belongs to the glycosyltransferase 31 family.

Its subcellular location is the endoplasmic reticulum membrane. It functions in the pathway protein modification; protein glycosylation. O-glucosyltransferase that transfers glucose toward fucose with a beta-1,3 linkage. Specifically glucosylates O-linked fucosylglycan on TSP type-1 domains of proteins, thereby contributing to elongation of O-fucosylglycan. The polypeptide is Beta-1,3-glucosyltransferase (Mus musculus (Mouse)).